Reading from the N-terminus, the 159-residue chain is Ubiquitin-conjugating enzyme E2 variant 1B (159 aa).

Residues 11-159 (PRNFRLLEEL…KGLVVKCCVM (149 aa)) form the UBC core domain.

The protein belongs to the ubiquitin-conjugating enzyme family. In terms of assembly, heterodimer with UBC35 or UBC36. As to expression, expressed in roots, shoots, leaves, stems and flowers, but not in pollen.

Its function is as follows. Has no ubiquitin ligase activity on its own. The heterodimer with UBC catalyzes the synthesis of non-canonical poly-ubiquitin chains that are linked through 'Lys-63'. This type of poly-ubiquitination does not lead to protein degradation by the proteasome. Mediates transcriptional activation of target genes. May play a role in the control of progress through the cell cycle and differentiation. May play a role in the error-free DNA repair pathway and contributes to the survival of cells after DNA damage. The chain is Ubiquitin-conjugating enzyme E2 variant 1B (UEV1B) from Arabidopsis thaliana (Mouse-ear cress).